The following is a 180-amino-acid chain: Large ribosomal subunit protein uL5 (180 aa).

Belongs to the universal ribosomal protein uL5 family. As to quaternary structure, part of the 50S ribosomal subunit; part of the 5S rRNA/L5/L18/L25 subcomplex. Contacts the 5S rRNA and the P site tRNA. Forms a bridge to the 30S subunit in the 70S ribosome.

Functionally, this is one of the proteins that bind and probably mediate the attachment of the 5S RNA into the large ribosomal subunit, where it forms part of the central protuberance. In the 70S ribosome it contacts protein S13 of the 30S subunit (bridge B1b), connecting the 2 subunits; this bridge is implicated in subunit movement. Contacts the P site tRNA; the 5S rRNA and some of its associated proteins might help stabilize positioning of ribosome-bound tRNAs. This Heliobacterium modesticaldum (strain ATCC 51547 / Ice1) protein is Large ribosomal subunit protein uL5.